Consider the following 265-residue polypeptide: Phosphatidylglycerol--prolipoprotein diacylglyceryl transferase (265 aa).

4 helical membrane-spanning segments follow: residues 17 to 37, 56 to 76, 92 to 112, and 117 to 137; these read LSIR…WLLG, LVTY…MLFY, WQGG…VWFF, and GKGF…GLFA. Arg139 lines the a 1,2-diacyl-sn-glycero-3-phospho-(1'-sn-glycerol) pocket. The next 3 membrane-spanning stretches (helical) occupy residues 173–193, 201–221, and 235–255; these read PSQL…VWLY, GAVS…VELV, and WLTM…WLLA.

Belongs to the Lgt family.

Its subcellular location is the cell inner membrane. The enzyme catalyses L-cysteinyl-[prolipoprotein] + a 1,2-diacyl-sn-glycero-3-phospho-(1'-sn-glycerol) = an S-1,2-diacyl-sn-glyceryl-L-cysteinyl-[prolipoprotein] + sn-glycerol 1-phosphate + H(+). Its pathway is protein modification; lipoprotein biosynthesis (diacylglyceryl transfer). In terms of biological role, catalyzes the transfer of the diacylglyceryl group from phosphatidylglycerol to the sulfhydryl group of the N-terminal cysteine of a prolipoprotein, the first step in the formation of mature lipoproteins. In Solidesulfovibrio magneticus (strain ATCC 700980 / DSM 13731 / RS-1) (Desulfovibrio magneticus), this protein is Phosphatidylglycerol--prolipoprotein diacylglyceryl transferase.